The following is a 206-amino-acid chain: Small ribosomal subunit protein eS1 (206 aa).

Belongs to the eukaryotic ribosomal protein eS1 family.

The chain is Small ribosomal subunit protein eS1 from Halobacterium salinarum (strain ATCC 29341 / DSM 671 / R1).